Reading from the N-terminus, the 261-residue chain is HLA class II histocompatibility antigen, DM alpha chain (261 aa).

Positions 1-26 are cleaved as a signal peptide; that stretch reads MGHEQNQGAALLQMLPLLWLLPHSWA. Positions 27 to 124 are alpha-1; the sequence is VPEAPTPMWP…KLDGKIPVSR (98 aa). The Lumenal portion of the chain corresponds to 27-233; it reads VPEAPTPMWP…PSDLLENVLC (207 aa). An N-linked (GlcNAc...) asparagine glycan is attached at asparagine 41. 2 disulfide bridges follow: cysteine 50-cysteine 105 and cysteine 147-cysteine 202. In terms of domain architecture, Ig-like C1-type spans 121-215; it reads PVSRGFPIAE…HEIDRYTAIA (95 aa). Residues 125–217 form an alpha-2 region; it reads GFPIAEVFTL…IDRYTAIAYW (93 aa). The tract at residues 218 to 233 is connecting peptide; it reads VPRNALPSDLLENVLC. Residues 234–254 form a helical membrane-spanning segment; sequence GVAFGLGVLGIIVGIVLIIYF. Residues 255–261 are Cytoplasmic-facing; that stretch reads RKPCSGD.

It belongs to the MHC class II family. Heterodimer of an alpha chain (DMA) and a beta chain (DMB). Interacts with MHCII; this interaction mediates rapid selection of high-affinity peptides in a pH-dependent manner, with an optimum at pH 5.5.

It is found in the late endosome membrane. The protein resides in the lysosome membrane. In terms of biological role, plays a critical role in catalyzing the release of class II-associated invariant chain peptide (CLIP) from newly synthesized MHC class II molecules and freeing the peptide binding site for acquisition of antigenic peptides. In B-cells, the interaction between HLA-DM and MHC class II molecules is regulated by HLA-DO. This Homo sapiens (Human) protein is HLA class II histocompatibility antigen, DM alpha chain (HLA-DMA).